Here is a 181-residue protein sequence, read N- to C-terminus: Protein csk22 (181 aa).

5 consecutive transmembrane segments (helical) span residues 5 to 22 (LQSV…YKKI), 35 to 57 (WLFT…SAIH), 61 to 78 (YGYL…VFFA), 91 to 113 (IYFR…RFLY), and 140 to 162 (LTIG…IIKL).

It is found in the cell membrane. This chain is Protein csk22 (csk22), found in Bacillus subtilis (strain 168).